Reading from the N-terminus, the 366-residue chain is Erythronate-4-phosphate dehydrogenase (366 aa).

Substrate contacts are provided by Ser-46 and Thr-67. NAD(+) is bound by residues Asp-147 and Thr-175. The active site involves Arg-208. Asp-228 is a binding site for NAD(+). Glu-233 is an active-site residue. Catalysis depends on His-250, which acts as the Proton donor. Gly-253 is an NAD(+) binding site. Tyr-254 contributes to the substrate binding site.

This sequence belongs to the D-isomer specific 2-hydroxyacid dehydrogenase family. PdxB subfamily. In terms of assembly, homodimer.

It localises to the cytoplasm. It catalyses the reaction 4-phospho-D-erythronate + NAD(+) = (R)-3-hydroxy-2-oxo-4-phosphooxybutanoate + NADH + H(+). It functions in the pathway cofactor biosynthesis; pyridoxine 5'-phosphate biosynthesis; pyridoxine 5'-phosphate from D-erythrose 4-phosphate: step 2/5. In terms of biological role, catalyzes the oxidation of erythronate-4-phosphate to 3-hydroxy-2-oxo-4-phosphonooxybutanoate. In Coxiella burnetii (strain Dugway 5J108-111), this protein is Erythronate-4-phosphate dehydrogenase.